The following is a 304-amino-acid chain: Glycine--tRNA ligase alpha subunit (304 aa).

Belongs to the class-II aminoacyl-tRNA synthetase family. Tetramer of two alpha and two beta subunits.

Its subcellular location is the cytoplasm. It carries out the reaction tRNA(Gly) + glycine + ATP = glycyl-tRNA(Gly) + AMP + diphosphate. This Streptococcus agalactiae serotype Ia (strain ATCC 27591 / A909 / CDC SS700) protein is Glycine--tRNA ligase alpha subunit.